The chain runs to 987 residues: Ras guanine nucleotide exchange factor efc25 (987 aa).

The segment covering 1 to 10 has biased composition (basic and acidic residues); it reads MRRPNLDRLR. Disordered regions lie at residues 1–50, 100–130, and 529–552; these read MRRP…STMS, FSST…PEIR, and NANT…ISRS. Positions 19 to 39 are enriched in low complexity; that stretch reads TSVSKPSTPSYSTYSLSPTFS. 3 stretches are compositionally biased toward polar residues: residues 40 to 50, 102 to 111, and 540 to 552; these read DKSVLSPSTMS, STHSLTRQPS, and RQTN…ISRS. Serine 552 carries the phosphoserine modification. An N-terminal Ras-GEF domain is found at 590-723; it reads SDNNVKGGTL…VILSEIDNLW (134 aa). In terms of domain architecture, Ras-GEF spans 752–985; it reads TPEEFASQMT…FDKSLSLEPR (234 aa).

The protein resides in the cytoplasm. Has a role in chromosome segregation and cell morphology upstream of the ras1-scd1 pathway. Promotes the exchange of ras1-bound GDP by GTP leading to its activation. In Schizosaccharomyces pombe (strain 972 / ATCC 24843) (Fission yeast), this protein is Ras guanine nucleotide exchange factor efc25 (efc25).